We begin with the raw amino-acid sequence, 154 residues long: Ferredoxin C 1, chloroplastic (154 aa).

The transit peptide at 1-56 (MATLPLPTQTSTISLPKPYLSNSFSFPLRNATLSTTTNRRNFLTTGRIIARAYKVV) directs the protein to the chloroplast. A 2Fe-2S ferredoxin-type domain is found at 57-142 (VEHDGKTTEL…DCHIKMIPEE (86 aa)). Residues C89, C94, C97, and C126 each contribute to the [2Fe-2S] cluster site.

The protein belongs to the 2Fe2S plant-type ferredoxin family. The cofactor is [2Fe-2S] cluster.

Its subcellular location is the plastid. It is found in the chloroplast. Ferredoxins are iron-sulfur proteins that transfer electrons in a wide variety of metabolic reactions. Mediates alternative electron partitioning in conditions of acceptor limitation at photosystem I. Accepts electrons from photosystem I (PSI) and is capable of electron transfer with FNR, but cannot support photoreduction of NADP(+). This chain is Ferredoxin C 1, chloroplastic, found in Arabidopsis thaliana (Mouse-ear cress).